The primary structure comprises 62 residues: UPF0434 protein RSc2531 (62 aa).

It belongs to the UPF0434 family.

The polypeptide is UPF0434 protein RSc2531 (Ralstonia nicotianae (strain ATCC BAA-1114 / GMI1000) (Ralstonia solanacearum)).